A 204-amino-acid chain; its full sequence is FMN-dependent NADH:quinone oxidoreductase (204 aa).

FMN-binding positions include Ser10 and Ser15–Ser17.

It belongs to the azoreductase type 1 family. In terms of assembly, homodimer. The cofactor is FMN.

The catalysed reaction is 2 a quinone + NADH + H(+) = 2 a 1,4-benzosemiquinone + NAD(+). It catalyses the reaction N,N-dimethyl-1,4-phenylenediamine + anthranilate + 2 NAD(+) = 2-(4-dimethylaminophenyl)diazenylbenzoate + 2 NADH + 2 H(+). Functionally, quinone reductase that provides resistance to thiol-specific stress caused by electrophilic quinones. Its function is as follows. Also exhibits azoreductase activity. Catalyzes the reductive cleavage of the azo bond in aromatic azo compounds to the corresponding amines. The polypeptide is FMN-dependent NADH:quinone oxidoreductase (Rhizobium johnstonii (strain DSM 114642 / LMG 32736 / 3841) (Rhizobium leguminosarum bv. viciae)).